Here is a 160-residue protein sequence, read N- to C-terminus: SsrA-binding protein (160 aa).

It belongs to the SmpB family.

Its subcellular location is the cytoplasm. Its function is as follows. Required for rescue of stalled ribosomes mediated by trans-translation. Binds to transfer-messenger RNA (tmRNA), required for stable association of tmRNA with ribosomes. tmRNA and SmpB together mimic tRNA shape, replacing the anticodon stem-loop with SmpB. tmRNA is encoded by the ssrA gene; the 2 termini fold to resemble tRNA(Ala) and it encodes a 'tag peptide', a short internal open reading frame. During trans-translation Ala-aminoacylated tmRNA acts like a tRNA, entering the A-site of stalled ribosomes, displacing the stalled mRNA. The ribosome then switches to translate the ORF on the tmRNA; the nascent peptide is terminated with the 'tag peptide' encoded by the tmRNA and targeted for degradation. The ribosome is freed to recommence translation, which seems to be the essential function of trans-translation. The chain is SsrA-binding protein from Mannheimia succiniciproducens (strain KCTC 0769BP / MBEL55E).